The following is a 239-amino-acid chain: Large ribosomal subunit protein uL1 (239 aa).

Belongs to the universal ribosomal protein uL1 family. In terms of assembly, part of the 50S ribosomal subunit.

Functionally, binds directly to 23S rRNA. The L1 stalk is quite mobile in the ribosome, and is involved in E site tRNA release. Its function is as follows. Protein L1 is also a translational repressor protein, it controls the translation of the L11 operon by binding to its mRNA. This Mycolicibacterium gilvum (strain PYR-GCK) (Mycobacterium gilvum (strain PYR-GCK)) protein is Large ribosomal subunit protein uL1.